The following is a 119-amino-acid chain: DNA-binding protein MMP0157 (119 aa).

Basic and acidic residues predominate over residues 1–12; it reads MNPEEIRQRRLQ. The tract at residues 1–35 is disordered; the sequence is MNPEEIRQRRLQEMQAKAQAQGAANDPEAQRQMQE.

The protein belongs to the PDCD5 family.

The chain is DNA-binding protein MMP0157 from Methanococcus maripaludis (strain DSM 14266 / JCM 13030 / NBRC 101832 / S2 / LL).